We begin with the raw amino-acid sequence, 633 residues long: Probable extracellular metalloproteinase 5 (633 aa).

An N-terminal signal peptide occupies residues 1–20; sequence MHGLLLAAAGLLSLPLHVLA. The propeptide occupies 21-244; that stretch reads HPQPSTNLAG…VHNVVDYVSH (224 aa). An N-linked (GlcNAc...) asparagine glycan is attached at N285. H428 serves as a coordination point for Zn(2+). E429 is a catalytic residue. H432 provides a ligand contact to Zn(2+). N-linked (GlcNAc...) asparagine glycans are attached at residues N592 and N621.

The protein belongs to the peptidase M36 family. Requires Zn(2+) as cofactor.

Its subcellular location is the secreted. Functionally, secreted metalloproteinase probably acting as a virulence factor. The sequence is that of Probable extracellular metalloproteinase 5 (MEP5) from Arthroderma benhamiae (strain ATCC MYA-4681 / CBS 112371) (Trichophyton mentagrophytes).